The chain runs to 526 residues: Cytochrome P450 monooxygenase 226 (526 aa).

Residues 15–35 (FATSYAALTVAAVTLLAALLV) traverse the membrane as a helical segment. N-linked (GlcNAc...) asparagine glycosylation is found at Asn219, Asn277, and Asn320. Residue Cys452 coordinates heme.

It belongs to the cytochrome P450 family. It depends on heme as a cofactor.

It is found in the membrane. It participates in secondary metabolite biosynthesis. Its function is as follows. Cytochrome P450 monooxygenase that is able to use anthracene, carbazole and phenanthrene as substrates for oxidation. These multifunctional properties against a series of polycyclic aromatic hydrocarbons (PAHs) suggest that CYP226 would play important roles, at least in part, in fungal metabolic systems involved in xenobiotic detoxification. In Postia placenta (strain ATCC 44394 / Madison 698-R) (Brown rot fungus), this protein is Cytochrome P450 monooxygenase 226.